Here is a 198-residue protein sequence, read N- to C-terminus: Glycerol-3-phosphate acyltransferase (198 aa).

Helical transmembrane passes span 2-22 (YAVLTAIIAYLIGCINNAYIF), 48-70 (LGYKAAAPVFALDVLKGVIAVLI), 75-97 (MGNTGAMIAGIAVVCGHNWPVFL), 111-131 (VVMTVSPLLGLIALAIGVTVI), and 154-174 (IFWNSTQIFIFSLILASLAIF).

This sequence belongs to the PlsY family. In terms of assembly, probably interacts with PlsX.

The protein resides in the cell membrane. It catalyses the reaction an acyl phosphate + sn-glycerol 3-phosphate = a 1-acyl-sn-glycero-3-phosphate + phosphate. Its pathway is lipid metabolism; phospholipid metabolism. Its function is as follows. Catalyzes the transfer of an acyl group from acyl-phosphate (acyl-PO(4)) to glycerol-3-phosphate (G3P) to form lysophosphatidic acid (LPA). This enzyme utilizes acyl-phosphate as fatty acyl donor, but not acyl-CoA or acyl-ACP. This is Glycerol-3-phosphate acyltransferase from Thermoanaerobacter sp. (strain X514).